Reading from the N-terminus, the 1420-residue chain is ABC transporter G family member 32 (1420 aa).

Residues 135–408 (LRNIHVIGGK…FSSLGFTCPD (274 aa)) enclose the ABC transporter 1 domain. 168 to 175 (GPPSSGKT) is a binding site for ATP. Residues 486–699 (ELLKINFAWQ…AQNAASVNEF (214 aa)) form the ABC transmembrane type-2 1 domain. The next 7 helical transmembrane spans lie at 504–524 (FIYV…MTVF), 544–564 (LYFS…MLVA), 585–605 (LPSW…WVAV), 623–643 (FLLY…MGSL), 648–668 (IVAN…GGFI), 674–694 (IPSW…QNAA), and 735–755 (IGVA…TLFL). The ABC transporter 2 domain occupies 818-1070 (LSFSNINYYV…ELIKYFESIE (253 aa)). Residue 863–870 (GVSGAGKT) coordinates ATP. The 215-residue stretch at 1143–1357 (SQFVACLWKQ…TLYGLLVSQY (215 aa)) folds into the ABC transmembrane type-2 2 domain. The next 7 helical transmembrane spans lie at 1162–1182 (YTAV…TICW), 1202–1222 (YAAV…VVSI), 1235–1255 (MYSA…YVLA), 1277–1297 (FLWY…YGMM), 1307–1327 (VASI…GFMI), 1334–1354 (LWWR…GLLV), and 1392–1412 (VSAI…AFAI).

It belongs to the ABC transporter superfamily. ABCG family. PDR (TC 3.A.1.205) subfamily. As to expression, ubiquitous in aerial organs. Higher expression levels in young, expanding tissues than in older tissues. Detected in the epidermal layer.

The protein localises to the cell membrane. Its function is as follows. May be a general defense protein. Required for the formation of the cuticle layer of the cell wall. This Arabidopsis thaliana (Mouse-ear cress) protein is ABC transporter G family member 32.